We begin with the raw amino-acid sequence, 312 residues long: Holliday junction branch migration complex subunit RuvB (312 aa).

The large ATPase domain (RuvB-L) stretch occupies residues 1–168; the sequence is MKTNYEFRPQ…FGHIFHLNEY (168 aa). Residues Arg8, Gly49, Lys52, Thr53, Thr54, 115-117, Arg158, Tyr168, and Arg206 each bind ATP; that span reads EDF. Thr53 serves as a coordination point for Mg(2+). The interval 169–234 is small ATPAse domain (RuvB-S); that stretch reads EPSEISAIIL…DIKNIFKKIQ (66 aa). Residues 237–312 form a head domain (RuvB-H) region; sequence EFGLDEQDIN…DFLKNNQLIK (76 aa). Lys290 and Arg295 together coordinate DNA.

It belongs to the RuvB family. In terms of assembly, homohexamer. Forms an RuvA(8)-RuvB(12)-Holliday junction (HJ) complex. HJ DNA is sandwiched between 2 RuvA tetramers; dsDNA enters through RuvA and exits via RuvB. An RuvB hexamer assembles on each DNA strand where it exits the tetramer. Each RuvB hexamer is contacted by two RuvA subunits (via domain III) on 2 adjacent RuvB subunits; this complex drives branch migration. In the full resolvosome a probable DNA-RuvA(4)-RuvB(12)-RuvC(2) complex forms which resolves the HJ.

Its subcellular location is the cytoplasm. The enzyme catalyses ATP + H2O = ADP + phosphate + H(+). Functionally, the RuvA-RuvB-RuvC complex processes Holliday junction (HJ) DNA during genetic recombination and DNA repair, while the RuvA-RuvB complex plays an important role in the rescue of blocked DNA replication forks via replication fork reversal (RFR). RuvA specifically binds to HJ cruciform DNA, conferring on it an open structure. The RuvB hexamer acts as an ATP-dependent pump, pulling dsDNA into and through the RuvAB complex. RuvB forms 2 homohexamers on either side of HJ DNA bound by 1 or 2 RuvA tetramers; 4 subunits per hexamer contact DNA at a time. Coordinated motions by a converter formed by DNA-disengaged RuvB subunits stimulates ATP hydrolysis and nucleotide exchange. Immobilization of the converter enables RuvB to convert the ATP-contained energy into a lever motion, pulling 2 nucleotides of DNA out of the RuvA tetramer per ATP hydrolyzed, thus driving DNA branch migration. The RuvB motors rotate together with the DNA substrate, which together with the progressing nucleotide cycle form the mechanistic basis for DNA recombination by continuous HJ branch migration. Branch migration allows RuvC to scan DNA until it finds its consensus sequence, where it cleaves and resolves cruciform DNA. The polypeptide is Holliday junction branch migration complex subunit RuvB (Ureaplasma parvum serovar 3 (strain ATCC 27815 / 27 / NCTC 11736)).